Reading from the N-terminus, the 318-residue chain is Ribosomal RNA small subunit methyltransferase H (318 aa).

Residues 34-36 (GGH), aspartate 57, leucine 91, aspartate 110, and glutamine 117 contribute to the S-adenosyl-L-methionine site.

The protein belongs to the methyltransferase superfamily. RsmH family.

Its subcellular location is the cytoplasm. It catalyses the reaction cytidine(1402) in 16S rRNA + S-adenosyl-L-methionine = N(4)-methylcytidine(1402) in 16S rRNA + S-adenosyl-L-homocysteine + H(+). Functionally, specifically methylates the N4 position of cytidine in position 1402 (C1402) of 16S rRNA. This Chlorobaculum parvum (strain DSM 263 / NCIMB 8327) (Chlorobium vibrioforme subsp. thiosulfatophilum) protein is Ribosomal RNA small subunit methyltransferase H.